Reading from the N-terminus, the 293-residue chain is Heterogeneous nuclear ribonucleoprotein C-like 4 (293 aa).

An RRM domain is found at 16–87; the sequence is SRVFIGNLNT…QVVDINLAAE (72 aa). Disordered regions lie at residues 140 to 177 and 208 to 293; these read VVPSKRQRISGNTSRRGKSGFNSKSGKRGSSKSGKLKG and HCKQ…QDDS. A coiled-coil region spans residues 177-208; it reads GDDLQAIKQELTQIKQKVDSLLENLEKIEKEH. Composition is skewed to basic and acidic residues over residues 208–222 and 229–240; these read HCKQGVEVKNAKSEE and SKKDKTHVKMES. The span at 242–263 shows a compositional bias: acidic residues; that stretch reads GGADDSVEEGDLLCDDDNEDQG. Residues 269–293 are compositionally biased toward basic and acidic residues; the sequence is LIKDDEKGAEEGEDDRDRANGQDDS.

Belongs to the RRM HNRPC family. RALY subfamily.

Its subcellular location is the nucleus. This Homo sapiens (Human) protein is Heterogeneous nuclear ribonucleoprotein C-like 4.